A 422-amino-acid polypeptide reads, in one-letter code: Protein phosphatase methylesterase 1 (422 aa).

Residues 1–27 (MSDMFRKSVLNKLPHLPPTRAPWADES) are disordered. Active-site residues include serine 207, aspartate 234, and histidine 371.

This sequence belongs to the AB hydrolase superfamily.

It catalyses the reaction [phosphatase 2A protein]-C-terminal L-leucine methyl ester + H2O = [phosphatase 2A protein]-C-terminal L-leucine + methanol + H(+). Demethylates proteins that have been reversibly carboxymethylated. Demethylates the phosphatase PP2A catalytic subunit. The sequence is that of Protein phosphatase methylesterase 1 (PPE1) from Cryptococcus neoformans var. neoformans serotype D (strain B-3501A) (Filobasidiella neoformans).